The primary structure comprises 264 residues: Thymidylate synthase (264 aa).

Position 21 (R21) interacts with dUMP. H51 lines the (6R)-5,10-methylene-5,6,7,8-tetrahydrofolate pocket. 126 to 127 (RR) is a binding site for dUMP. Catalysis depends on C146, which acts as the Nucleophile. DUMP contacts are provided by residues 166-169 (RSCD), N177, and 207-209 (HLY). D169 lines the (6R)-5,10-methylene-5,6,7,8-tetrahydrofolate pocket. A263 is a binding site for (6R)-5,10-methylene-5,6,7,8-tetrahydrofolate.

The protein belongs to the thymidylate synthase family. Bacterial-type ThyA subfamily. Homodimer.

The protein localises to the cytoplasm. It catalyses the reaction dUMP + (6R)-5,10-methylene-5,6,7,8-tetrahydrofolate = 7,8-dihydrofolate + dTMP. The protein operates within pyrimidine metabolism; dTTP biosynthesis. Its function is as follows. Catalyzes the reductive methylation of 2'-deoxyuridine-5'-monophosphate (dUMP) to 2'-deoxythymidine-5'-monophosphate (dTMP) while utilizing 5,10-methylenetetrahydrofolate (mTHF) as the methyl donor and reductant in the reaction, yielding dihydrofolate (DHF) as a by-product. This enzymatic reaction provides an intracellular de novo source of dTMP, an essential precursor for DNA biosynthesis. The protein is Thymidylate synthase of Escherichia fergusonii (strain ATCC 35469 / DSM 13698 / CCUG 18766 / IAM 14443 / JCM 21226 / LMG 7866 / NBRC 102419 / NCTC 12128 / CDC 0568-73).